We begin with the raw amino-acid sequence, 499 residues long: ATP synthase subunit alpha (499 aa).

169–176 (GDRGTGKT) is a binding site for ATP.

The protein belongs to the ATPase alpha/beta chains family. In terms of assembly, F-type ATPases have 2 components, CF(1) - the catalytic core - and CF(0) - the membrane proton channel. CF(1) has five subunits: alpha(3), beta(3), gamma(1), delta(1), epsilon(1). CF(0) has three main subunits: a(1), b(2) and c(9-12). The alpha and beta chains form an alternating ring which encloses part of the gamma chain. CF(1) is attached to CF(0) by a central stalk formed by the gamma and epsilon chains, while a peripheral stalk is formed by the delta and b chains.

Its subcellular location is the cell inner membrane. It catalyses the reaction ATP + H2O + 4 H(+)(in) = ADP + phosphate + 5 H(+)(out). Functionally, produces ATP from ADP in the presence of a proton gradient across the membrane. The alpha chain is a regulatory subunit. The chain is ATP synthase subunit alpha from Brachyspira hyodysenteriae (strain ATCC 49526 / WA1).